The following is a 274-amino-acid chain: Transcription factor Ovo-like 2 (274 aa).

Residues 1 to 11 show a composition bias toward basic residues; that stretch reads MPKVFLVKRRS. The segment at 1–88 is disordered; sequence MPKVFLVKRR…ETPELHDAQG (88 aa). A compositionally biased stretch (basic and acidic residues) spans 18-29; the sequence is SWDELPDDKRAD. Positions 50–74 are enriched in low complexity; sequence DGGSSSGCSSSAGEPGGAESSSSPR. 4 consecutive C2H2-type zinc fingers follow at residues 118–140, 146–168, 174–197, and 213–236; these read HNCD…LKCH, HLCT…VRTH, YKCE…KKIH, and YVCE…NSDH. S268 is modified (phosphoserine).

Belongs to the krueppel C2H2-type zinc-finger protein family. In terms of assembly, interacts (via zinc-finger domains) with CEBPA (via bZIP domain); the interaction inhibits the transcription factor activity of CEBPA and is required to repress adipogenesis. As to expression, expressed highly in testis, specifically in spermatocytes. Expressed also in skin and at lower levels in the ovary. Expressed in adipose tissues. Expression is lower than in testis and a relatively higher expression level is detected in the stromal vascular fraction (SVF) than in fat cells themselves.

Its subcellular location is the nucleus. Zinc-finger transcription repressor factor. Plays a critical role in maintaining the identity of epithelial lineages by suppressing epithelial-to mesenchymal transition (EMT) mainly through the repression of ZEB1, an EMT inducer. Positively regulates neuronal differentiation. Suppresses cell cycling and terminal differentiation of keratinocytes by directly repressing MYC and NOTCH1. Important for the correct development of primordial germ cells in embryos. Plays dual functions in thermogenesis and adipogenesis to maintain energy balance. Essential for brown/beige adipose tissue-mediated thermogenesis, is necessary for the development of brown adipocytes. In white adipose tissues, limits adipogenesis by blocking CEBPA binding to its transcriptional targets and inhibiting its transcription factor activity. The sequence is that of Transcription factor Ovo-like 2 from Mus musculus (Mouse).